Consider the following 342-residue polypeptide: Biotin synthase (342 aa).

The region spanning 63-290 (NTVQLSTLLS…GAMVRLSAGR (228 aa)) is the Radical SAM core domain. C78, C82, and C85 together coordinate [4Fe-4S] cluster. 4 residues coordinate [2Fe-2S] cluster: C122, C153, C213, and R285.

It belongs to the radical SAM superfamily. Biotin synthase family. As to quaternary structure, homodimer. It depends on [4Fe-4S] cluster as a cofactor. The cofactor is [2Fe-2S] cluster.

It catalyses the reaction (4R,5S)-dethiobiotin + (sulfur carrier)-SH + 2 reduced [2Fe-2S]-[ferredoxin] + 2 S-adenosyl-L-methionine = (sulfur carrier)-H + biotin + 2 5'-deoxyadenosine + 2 L-methionine + 2 oxidized [2Fe-2S]-[ferredoxin]. The protein operates within cofactor biosynthesis; biotin biosynthesis; biotin from 7,8-diaminononanoate: step 2/2. In terms of biological role, catalyzes the conversion of dethiobiotin (DTB) to biotin by the insertion of a sulfur atom into dethiobiotin via a radical-based mechanism. The sequence is that of Biotin synthase from Cupriavidus pinatubonensis (strain JMP 134 / LMG 1197) (Cupriavidus necator (strain JMP 134)).